A 344-amino-acid chain; its full sequence is Heat-inducible transcription repressor HrcA (344 aa).

The protein belongs to the HrcA family.

In terms of biological role, negative regulator of class I heat shock genes (grpE-dnaK-dnaJ and groELS operons). Prevents heat-shock induction of these operons. This Streptococcus equi subsp. equi (strain 4047) protein is Heat-inducible transcription repressor HrcA.